The primary structure comprises 578 residues: Frizzled-2 (578 aa).

The signal sequence occupies residues 1-17; that stretch reads MLLRISVLFLLLGSCGA. The Extracellular segment spans residues 18–236; the sequence is LFGKRQKCEQ…AESHSLVSNW (219 aa). In terms of domain architecture, FZ spans 20 to 144; that stretch reads GKRQKCEQIT…MSTGNICAAP (125 aa). Cystine bridges form between C25/C86, C33/C79, C70/C108, C97/C141, and C101/C125. An N-linked (GlcNAc...) asparagine glycan is attached at N39. The interval 138–175 is disordered; it reads GNICAAPPDTPKKQHKGHHHKNQNQNQNQNHNYSPDGP. The segment covering 150 to 159 has biased composition (basic residues); the sequence is KQHKGHHHKN. A compositionally biased stretch (low complexity) spans 160–169; the sequence is QNQNQNQNHN. An N-linked (GlcNAc...) asparagine glycan is attached at N213. A helical transmembrane segment spans residues 237 to 257; that stretch reads MAFWSITCCVLASFTFLTFLI. At 258–268 the chain is on the cytoplasmic side; that stretch reads ETDRFQYPERP. Residues 269-289 form a helical membrane-spanning segment; it reads IFMLAFCQLMVAVGFMIRYFV. Over 290-312 the chain is Extracellular; it reads GHEEIACDSMRIKGADDNSGSLC. A helical transmembrane segment spans residues 313 to 333; it reads FVVFLLTYFFGMAASVWWVIL. Residues 334–354 are Cytoplasmic-facing; the sequence is SLTWVLSAASKWSPEAISSFS. The helical transmembrane segment at 355–375 threads the bilayer; the sequence is FHFHVVGWCLPAIQTVLVIVF. Over 376-398 the chain is Extracellular; sequence NAIDGDPITGICYVGNTDLQFQR. Residues 399–419 form a helical membrane-spanning segment; that stretch reads IFVLFPLLVYFIVGVLFLVIG. The Cytoplasmic portion of the chain corresponds to 420-449; the sequence is FCNLWSIRNEVQKQHPSLESAHKITQLMSK. The chain crosses the membrane as a helical span at residues 450-470; the sequence is IGIFSLLYTIPSLLIICVLFY. The Extracellular segment spans residues 471-497; it reads EQNHRSLWEQSQLCSCSPKQTIGDSSL. The chain crosses the membrane as a helical span at residues 498 to 518; the sequence is IISLIKTCCMCILGWTSGFWV. The Cytoplasmic segment spans residues 519-578; the sequence is CSTKTLSSWKNAICCLGSSRSLPKYQPADILYAKSDMSSSQFYNTSLRHNHLYGGIPDKL. Positions 522 to 527 match the Lys-Thr-X-X-X-Trp motif, mediates interaction with the PDZ domain of Dvl family members motif; sequence KTLSSW. Residues 556–558 carry the PDZ-binding motif; sequence SSS.

The protein belongs to the G-protein coupled receptor Fz/Smo family. Expressed in two pairs of head neurons and throughout the pharynx.

The protein localises to the cell membrane. Receptor for Wnt proteins. Most frizzled receptors are coupled to the beta-catenin canonical signaling pathway, which leads to the activation of disheveled proteins, inhibition of gsk-3 kinase, nuclear accumulation of beta-catenin and activation of Wnt target genes. A second signaling pathway involving PKC and calcium fluxes has been seen for some family members, but it is not yet clear if it represents a distinct pathway or if it can be integrated in the canonical pathway, as PKC seems to be required for Wnt-mediated inactivation of gsk-3 kinase. Both pathways seem to involve interactions with G-proteins. Required for the migration and axon formation and guidance of different neuronal cell types including canal-associated neurons (CAN), hermaphrodite-specific neurons (HSN), anterior lateral microtubule neurons (ALM), and the right Q neuroblast (QR) and its descendants. Directs ALM migration through frizzled protein mom-5 and Wnt ligands cwn-1, cwn-2 and egl-20. May act redundantly with mom-5 to direct CAN migration. Plays a role in the organization of head ganglion cells. Probably by acting as a receptor for Wnt ligand cwn-2, plays a role in the positioning of the nerve ring and may in addition positively regulate the neurite outgrowth of RME GABAergic motor neurons along the anterior-posterior axis of the body. The sequence is that of Frizzled-2 from Caenorhabditis elegans.